A 202-amino-acid chain; its full sequence is Putative pituitary tumor-transforming gene 3 protein (202 aa).

Residues 61-64 carry the D-box motif; sequence RKAL. The SH3-binding signature appears at 163–173; the sequence is PPSPLKMPSPP.

This sequence belongs to the securin family.

The protein resides in the cytoplasm. It localises to the nucleus. This Pan troglodytes (Chimpanzee) protein is Putative pituitary tumor-transforming gene 3 protein (PTTG3).